The primary structure comprises 235 residues: Leucyl/phenylalanyl-tRNA--protein transferase (235 aa).

It belongs to the L/F-transferase family.

It localises to the cytoplasm. It carries out the reaction N-terminal L-lysyl-[protein] + L-leucyl-tRNA(Leu) = N-terminal L-leucyl-L-lysyl-[protein] + tRNA(Leu) + H(+). It catalyses the reaction N-terminal L-arginyl-[protein] + L-leucyl-tRNA(Leu) = N-terminal L-leucyl-L-arginyl-[protein] + tRNA(Leu) + H(+). The enzyme catalyses L-phenylalanyl-tRNA(Phe) + an N-terminal L-alpha-aminoacyl-[protein] = an N-terminal L-phenylalanyl-L-alpha-aminoacyl-[protein] + tRNA(Phe). Functions in the N-end rule pathway of protein degradation where it conjugates Leu, Phe and, less efficiently, Met from aminoacyl-tRNAs to the N-termini of proteins containing an N-terminal arginine or lysine. The polypeptide is Leucyl/phenylalanyl-tRNA--protein transferase (Azoarcus sp. (strain BH72)).